The chain runs to 538 residues: Carboxypeptidase 2 (538 aa).

The N-terminal stretch at 1-21 (MVAYRFLTLISLGLGSHCASA) is a signal peptide. Asparagine 46 carries an N-linked (GlcNAc...) asparagine glycan. The segment at 53–76 (PAFTSPGTVPRGFSDGTSGPTRDE) is disordered. In terms of domain architecture, Peptidase M14 spans 71–351 (GPTRDETMEG…VMVKSILQTA (281 aa)). Residues histidine 136, glutamate 139, and histidine 224 each coordinate Zn(2+). Glutamate 322 serves as the catalytic Proton donor/acceptor. Asparagine 393 and asparagine 459 each carry an N-linked (GlcNAc...) asparagine glycan.

Belongs to the peptidase M14 family. Requires Zn(2+) as cofactor.

It localises to the secreted. Its function is as follows. Extracellular metalloprotease that contributes to pathogenicity. The polypeptide is Carboxypeptidase 2 (MCPB) (Trichophyton tonsurans (Scalp ringworm fungus)).